The primary structure comprises 368 residues: Histidinol-phosphate aminotransferase (368 aa).

N6-(pyridoxal phosphate)lysine is present on Lys215.

The protein belongs to the class-II pyridoxal-phosphate-dependent aminotransferase family. Histidinol-phosphate aminotransferase subfamily. As to quaternary structure, homodimer. Pyridoxal 5'-phosphate is required as a cofactor.

The catalysed reaction is L-histidinol phosphate + 2-oxoglutarate = 3-(imidazol-4-yl)-2-oxopropyl phosphate + L-glutamate. The protein operates within amino-acid biosynthesis; L-histidine biosynthesis; L-histidine from 5-phospho-alpha-D-ribose 1-diphosphate: step 7/9. This Buchnera aphidicola subsp. Acyrthosiphon pisum (strain 5A) protein is Histidinol-phosphate aminotransferase.